The sequence spans 196 residues: MDQRILNVELRSKTGKGISRQLRRSESIPGVVYGKGIESVSVSLKTKELSNAIAGEGGRNHILTLKGGGSLDGQMVIVADLLQDSLKGLPLHVDLHKINLADKIKVKVKVNLVGTAAGVKEGGLLDFAMHEIEIECLPSHIPEHLDVDVTSLTLGHSIHIGDLKELPGIKVLGDPKASIISVLGRAKEEAAPVAEA.

The protein belongs to the bacterial ribosomal protein bL25 family. CTC subfamily. In terms of assembly, part of the 50S ribosomal subunit; part of the 5S rRNA/L5/L18/L25 subcomplex. Contacts the 5S rRNA. Binds to the 5S rRNA independently of L5 and L18.

Its function is as follows. This is one of the proteins that binds to the 5S RNA in the ribosome where it forms part of the central protuberance. This Geotalea daltonii (strain DSM 22248 / JCM 15807 / FRC-32) (Geobacter daltonii) protein is Large ribosomal subunit protein bL25.